We begin with the raw amino-acid sequence, 476 residues long: Monodehydroascorbate reductase 2, peroxisomal (476 aa).

Over 1 to 3 (MGR) the chain is Cytoplasmic. Residues 4–24 (AFVHVILGGGVAAGYAALEFA) traverse the membrane as a helical segment. FAD contacts are provided by residues 12–15 (GGVA), glutamate 40, arginine 47, lysine 52, and 146–147 (RN). Residues 25 to 447 (RRGGYSRGEL…GGLALGEKPT (423 aa)) are Peroxisomal-facing. Residues 171-177 (GGYIGME), glutamate 195, arginine 201, and glycine 260 each bind NAD(+). 173-177 (YIGME) provides a ligand contact to NADP(+). NADP(+) is bound by residues arginine 201 and glycine 260. Aspartate 297 serves as a coordination point for FAD. An NAD(+)-binding site is contributed by 314-315 (EH). 314 to 315 (EH) contributes to the NADP(+) binding site. An FAD-binding site is contributed by valine 316. Arginine 320 contacts L-ascorbate. Tyrosine 346 serves as a coordination point for FAD. Tyrosine 346 contacts NAD(+). Residue tyrosine 346 participates in NADP(+) binding. Residue arginine 348 participates in L-ascorbate binding. Residues 448-468 (YVWHATAGVIAAASIAAFGYW) traverse the membrane as a helical segment. The Cytoplasmic segment spans residues 469 to 476 (YGRKRRRW).

It belongs to the FAD-dependent oxidoreductase family. FAD is required as a cofactor.

The protein resides in the peroxisome membrane. It carries out the reaction 2 monodehydro-L-ascorbate radical + NADH + H(+) = 2 L-ascorbate + NAD(+). Its function is as follows. Catalyzes the conversion of monodehydroascorbate to ascorbate, oxidizing NADH in the process. Ascorbate is a major antioxidant against reactive oxygen species (ROS) and nitric oxide (NO). This Oryza sativa subsp. japonica (Rice) protein is Monodehydroascorbate reductase 2, peroxisomal.